The sequence spans 172 residues: Large ribosomal subunit protein uL10 (172 aa).

This sequence belongs to the universal ribosomal protein uL10 family. As to quaternary structure, part of the ribosomal stalk of the 50S ribosomal subunit. The N-terminus interacts with L11 and the large rRNA to form the base of the stalk. The C-terminus forms an elongated spine to which L12 dimers bind in a sequential fashion forming a multimeric L10(L12)X complex.

Functionally, forms part of the ribosomal stalk, playing a central role in the interaction of the ribosome with GTP-bound translation factors. The protein is Large ribosomal subunit protein uL10 of Rhodospirillum centenum (strain ATCC 51521 / SW).